We begin with the raw amino-acid sequence, 491 residues long: HEPACAM family member 2 (491 aa).

An N-terminal signal peptide occupies residues 1 to 18 (MWLRVFTAFLSFTAGACS). 3 N-linked (GlcNAc...) asparagine glycosylation sites follow: N73, N117, and N153. 2 consecutive Ig-like C2-type domains span residues 137–221 (PVVQ…SDII) and 223–319 (PTIY…THFT). Disulfide bonds link C158/C207 and C258/C303. An N-linked (GlcNAc...) asparagine glycan is attached at N308. A helical membrane pass occupies residues 340–360 (LASITGISLFLIISMCLLFLW). The Cytoplasmic portion of the chain corresponds to 361–491 (KKFQPYKVIK…GKHSRAKQCI (131 aa)). Polar residues predominate over residues 444–454 (QQQDHPESSSQ). Disordered regions lie at residues 444 to 466 (QQQD…DRHD) and 472 to 491 (ELGH…KQCI). Over residues 472–482 (ELGHCKEQDKG) the composition is skewed to basic and acidic residues.

Poly-ADP-ribosylated (PARsylated) by tankyrase TNKS during late G2 and prophase, leading to translocation to mitotic centrosomes. In terms of processing, N-glycosylated.

The protein localises to the golgi apparatus membrane. The protein resides in the cytoplasm. It localises to the cytoskeleton. Its subcellular location is the spindle. It is found in the microtubule organizing center. The protein localises to the centrosome. The protein resides in the midbody. Functionally, required during prometaphase for centrosome maturation. Following poly-ADP-ribosylation (PARsylation) by TNKS, translocates from the Golgi apparatus to mitotic centrosomes and plays a key role in the formation of robust microtubules for prompt movement of chromosomes: anchors AKAP9/CG-NAP, a scaffold protein of the gamma-tubulin ring complex and promotes centrosome maturation. The chain is HEPACAM family member 2 (HEPACAM2) from Bos taurus (Bovine).